The chain runs to 467 residues: Zinc finger protein ZIC 3 (467 aa).

The tract at residues 66-107 is disordered; the sequence is LSSGQSSAFTPQGSGYANALGHHHHHHHHHHHTSQVPSYGGA. The segment covering 67–80 has biased composition (polar residues); that stretch reads SSGQSSAFTPQGSG. A compositionally biased stretch (basic residues) spans 86–98; it reads GHHHHHHHHHHHT. Lysine 248 participates in a covalent cross-link: Glycyl lysine isopeptide (Lys-Gly) (interchain with G-Cter in SUMO2). The C2H2-type 1; atypical zinc finger occupies 251–286; the sequence is LSCKWIDEAQLSRPKKSCDRTFSTMHELVTHVTMEH. Residues 295-322 form a C2H2-type 2; atypical zinc finger; the sequence is HVCYWEECPREGKSFKAKYKLVNHIRVH. Short sequence motifs (nuclear localization signal) lie at residues 297 to 322 and 330 to 352; these read CYWE…IRVH and CPFP…KRTH. C2H2-type zinc fingers lie at residues 328–352, 358–382, and 388–410; these read FPCP…KRTH, FKCE…MHVH, and YICK…MKVH. Residues 404 to 467 form a disordered region; the sequence is RKHMKVHESQ…LPPNFNEWYV (64 aa). Positions 412–428 are enriched in low complexity; that stretch reads SQGSDSSPAASSGYESS. Residues 435 to 455 are compositionally biased toward polar residues; sequence SANSKDTTKTPSAVQTSTSHN.

The protein belongs to the GLI C2H2-type zinc-finger protein family. Interacts (via the C2H2-type domains 3, 4 and 5) with MDFIC (via the C2H2-type domains 3, 4 and 5); the interaction reduces its transcriptional activity. Interacts with KPNA1 and KPNA6. Interacts (via C2H2-type domains 3, 4 and 5) with GLI3; the interaction enhances its transcriptional activity.

Its subcellular location is the nucleus. The protein localises to the cytoplasm. Acts as a transcriptional activator. Required in the earliest stages in both axial midline development and left-right (LR) asymmetry specification. Binds to the minimal GLI-consensus sequence 5'-GGGTGGTC-3'. In Homo sapiens (Human), this protein is Zinc finger protein ZIC 3 (ZIC3).